A 147-amino-acid chain; its full sequence is UPF0178 protein VP2328 (147 aa).

This sequence belongs to the UPF0178 family.

In Vibrio parahaemolyticus serotype O3:K6 (strain RIMD 2210633), this protein is UPF0178 protein VP2328.